Reading from the N-terminus, the 228-residue chain is MGRKLLAEFFGTFWLVFGGCGSAVFAAAFPELGIGFTGVALAFGLTVLTMAYAVGGISGGHFNPAVSVGLTVAGRFPASSLVPYVIAQVAGAIVAAAALYVIATGKAGIDLGGFASNGYGEHSPGGYSLVSALLIEIILTAFFLIVILGSTHGRVPAGFAPIAIGLALTLIHLISIPVTNTSVNPARSTGQALFVGGWALQQLWLFWLAPIVGGAAGAVIWKLFGEKD.

The next 2 helical transmembrane spans lie at Phe9–Phe29 and Ile34–Val54. Residues Asn63–Ala65 carry the NPA 1 motif. 3 consecutive transmembrane segments (helical) span residues Val82–Ile102, Leu129–Gly149, and Gly158–Val178. The NPA 2 motif lies at Asn184 to Ala186. The chain crosses the membrane as a helical span at residues Trp204–Phe224.

Belongs to the MIP/aquaporin (TC 1.A.8) family. Homotetramer.

It is found in the cell inner membrane. It catalyses the reaction H2O(in) = H2O(out). In terms of biological role, channel that permits osmotically driven movement of water in both directions. It is involved in the osmoregulation and in the maintenance of cell turgor during volume expansion in rapidly growing cells. It mediates rapid entry or exit of water in response to abrupt changes in osmolarity. The protein is Aquaporin Z 2 of Agrobacterium fabrum (strain C58 / ATCC 33970) (Agrobacterium tumefaciens (strain C58)).